The following is a 649-amino-acid chain: UvrABC system protein B (649 aa).

The Helicase ATP-binding domain maps to 25 to 178; the sequence is EHYKDGIKEQ…EDILKELVKM (154 aa). 38-45 is a binding site for ATP; sequence GVTGSGKT. Positions 91–114 match the Beta-hairpin motif; sequence YYDYYQPEAYVAQTDTFIDKESAI. The region spanning 428–594 is the Helicase C-terminal domain; the sequence is QVDDLLGEIR…SVVRKLKDKK (167 aa). The region spanning 614–649 is the UVR domain; that stretch reads DEIIKELEKEMKQAAKDLNFEKAAKLRDRIMELKEE.

Belongs to the UvrB family. As to quaternary structure, forms a heterotetramer with UvrA during the search for lesions. Interacts with UvrC in an incision complex.

The protein resides in the cytoplasm. The UvrABC repair system catalyzes the recognition and processing of DNA lesions. A damage recognition complex composed of 2 UvrA and 2 UvrB subunits scans DNA for abnormalities. Upon binding of the UvrA(2)B(2) complex to a putative damaged site, the DNA wraps around one UvrB monomer. DNA wrap is dependent on ATP binding by UvrB and probably causes local melting of the DNA helix, facilitating insertion of UvrB beta-hairpin between the DNA strands. Then UvrB probes one DNA strand for the presence of a lesion. If a lesion is found the UvrA subunits dissociate and the UvrB-DNA preincision complex is formed. This complex is subsequently bound by UvrC and the second UvrB is released. If no lesion is found, the DNA wraps around the other UvrB subunit that will check the other stand for damage. The chain is UvrABC system protein B from Methanosphaera stadtmanae (strain ATCC 43021 / DSM 3091 / JCM 11832 / MCB-3).